A 99-amino-acid chain; its full sequence is NADH-quinone oxidoreductase subunit K (99 aa).

The next 3 helical transmembrane spans lie at 3–23 (LVNY…TVLV), 28–48 (IIMF…FVAF), and 59–79 (VVAF…LAII).

It belongs to the complex I subunit 4L family. In terms of assembly, NDH-1 is composed of 14 different subunits. Subunits NuoA, H, J, K, L, M, N constitute the membrane sector of the complex.

It is found in the cell membrane. It carries out the reaction a quinone + NADH + 5 H(+)(in) = a quinol + NAD(+) + 4 H(+)(out). NDH-1 shuttles electrons from NADH, via FMN and iron-sulfur (Fe-S) centers, to quinones in the respiratory chain. The immediate electron acceptor for the enzyme in this species is believed to be a menaquinone. Couples the redox reaction to proton translocation (for every two electrons transferred, four hydrogen ions are translocated across the cytoplasmic membrane), and thus conserves the redox energy in a proton gradient. The sequence is that of NADH-quinone oxidoreductase subunit K from Beutenbergia cavernae (strain ATCC BAA-8 / DSM 12333 / CCUG 43141 / JCM 11478 / NBRC 16432 / NCIMB 13614 / HKI 0122).